Consider the following 134-residue polypeptide: MAEQQQQRSLSAELQELVLVALGAVPGALLRWQVALHWADRHLLVNVLGAALLGLLAGLPAAPRRQLLVGIGFCGSLTTFSSWMVDAMQLISAGQIAEAFGLIGLTLGLGVGAAALGFWLGQRLRLLKLPRSEP.

4 consecutive transmembrane segments (helical) span residues 10–30 (LSAE…GALL), 43–63 (LLVN…PAAP), 67–87 (LLVG…MVDA), and 100–120 (FGLI…GFWL). Na(+) is bound by residues glycine 75 and threonine 78.

Belongs to the fluoride channel Fluc/FEX (TC 1.A.43) family.

It is found in the cell inner membrane. The catalysed reaction is fluoride(in) = fluoride(out). With respect to regulation, na(+) is not transported, but it plays an essential structural role and its presence is essential for fluoride channel function. Functionally, fluoride-specific ion channel. Important for reducing fluoride concentration in the cell, thus reducing its toxicity. The chain is Fluoride-specific ion channel FluC 2 from Synechococcus sp. (strain CC9902).